The following is a 276-amino-acid chain: Hemin import ATP-binding protein HmuV (276 aa).

The ABC transporter domain occupies 2–259 (LTAHHLDVAR…AHIAQCYGFA (258 aa)). 34–41 (GRNGAGKS) is a binding site for ATP.

It belongs to the ABC transporter superfamily. Heme (hemin) importer (TC 3.A.1.14.5) family. In terms of assembly, the complex is composed of two ATP-binding proteins (HmuV), two transmembrane proteins (HmuU) and a solute-binding protein (HmuT).

It localises to the cell inner membrane. Its function is as follows. Part of the ABC transporter complex HmuTUV involved in hemin import. Responsible for energy coupling to the transport system. The polypeptide is Hemin import ATP-binding protein HmuV (Burkholderia cenocepacia (strain HI2424)).